Reading from the N-terminus, the 223-residue chain is uncharacterized protein (223 aa).

The protein localises to the plastid. It is found in the chloroplast. This is an uncharacterized protein from Mesostigma viride (Green alga).